The following is a 155-amino-acid chain: Small ribosomal subunit protein uS7c (155 aa).

It belongs to the universal ribosomal protein uS7 family. As to quaternary structure, part of the 30S ribosomal subunit.

It localises to the plastid. Its function is as follows. One of the primary rRNA binding proteins, it binds directly to 16S rRNA where it nucleates assembly of the head domain of the 30S subunit. This Aneura mirabilis (Parasitic liverwort) protein is Small ribosomal subunit protein uS7c (rps7).